Here is a 94-residue protein sequence, read N- to C-terminus: Small ribosomal subunit protein uS17 (94 aa).

Belongs to the universal ribosomal protein uS17 family. In terms of assembly, part of the 30S ribosomal subunit.

Its function is as follows. One of the primary rRNA binding proteins, it binds specifically to the 5'-end of 16S ribosomal RNA. The polypeptide is Small ribosomal subunit protein uS17 (Symbiobacterium thermophilum (strain DSM 24528 / JCM 14929 / IAM 14863 / T)).